The sequence spans 555 residues: Protein PLASTID TRANSCRIPTIONALLY ACTIVE 12, chloroplastic (555 aa).

Residues methionine 1 to lysine 58 constitute a chloroplast transit peptide. Disordered regions lie at residues tyrosine 80 to glycine 100, alanine 115 to valine 167, and serine 468 to serine 541. Residues glutamine 144–alanine 154 are compositionally biased toward polar residues. Composition is skewed to acidic residues over residues glutamate 471–valine 480 and leucine 490–glutamate 502. Polar residues predominate over residues asparagine 508–glutamine 519. Residues glutamate 521–isoleucine 538 show a composition bias toward basic and acidic residues.

Component of the plastid-encoded plastid RNA polymerase (PEP) complex.

The protein localises to the plastid. It is found in the chloroplast stroma. The protein resides in the nucleus. Its function is as follows. Required for the activity of the plastid-encoded RNA polymerase (PEP) and full expression of genes transcribed by PEP. Required for the proper build-up and formation of the PEP-complex. Binds single-stranded (ss) DNA and RNA, but not double-stranded (ds) DNA. This chain is Protein PLASTID TRANSCRIPTIONALLY ACTIVE 12, chloroplastic, found in Zea mays (Maize).